The primary structure comprises 274 residues: Carbonic anhydrase (274 aa).

3 residues coordinate Zn(2+): Cys-39, His-98, and Cys-101. The tract at residues 214–274 is disordered; sequence EDEYAPHPNS…QAERIYRGSR (61 aa). Composition is skewed to basic and acidic residues over residues 234 to 245 and 261 to 274; these read PGKERPGREKAT and LPREQAERIYRGSR.

It belongs to the beta-class carbonic anhydrase family. In terms of assembly, a hexamer formed by a trimer of dimers. Interacts with the first 260 residues of CcmM; both the N-terminal 206 residues and the C-terminal tail contribute to CcmM binding. Interacts with full-length and the N-terminal 249 residues of CcmM. A probable CcmM-CcaA-CcmN complex as well as a CcaA-RuBisCO-CcmM complex can also be isolated. Zn(2+) serves as cofactor.

The protein localises to the carboxysome. It catalyses the reaction hydrogencarbonate + H(+) = CO2 + H2O. With respect to regulation, inhibited by ethoxyzolamide. Its function is as follows. Reversible hydration of carbon dioxide. Essential to photosynthetic carbon dioxide fixation, supplies CO(2) to RuBisCO (ribulose bisphosphate carboxylase, rbcL-rbcS) in the carboxysome. The polypeptide is Carbonic anhydrase (Synechocystis sp. (strain ATCC 27184 / PCC 6803 / Kazusa)).